Reading from the N-terminus, the 519-residue chain is Glutamate--cysteine ligase (519 aa).

This sequence belongs to the glutamate--cysteine ligase type 1 family. Type 1 subfamily.

It carries out the reaction L-cysteine + L-glutamate + ATP = gamma-L-glutamyl-L-cysteine + ADP + phosphate + H(+). It functions in the pathway sulfur metabolism; glutathione biosynthesis; glutathione from L-cysteine and L-glutamate: step 1/2. This chain is Glutamate--cysteine ligase, found in Yersinia pseudotuberculosis serotype I (strain IP32953).